The primary structure comprises 178 residues: NADH-quinone oxidoreductase subunit I (178 aa).

2 consecutive 4Fe-4S ferredoxin-type domains span residues 45–74 (RHPDTGLEKCIGCSLCAAACPAYAIYVEAA) and 90–119 (KVYEINMLRCIFCGLCEEACPTGAVVLGNE). 8 residues coordinate [4Fe-4S] cluster: C54, C57, C60, C64, C99, C102, C105, and C109.

This sequence belongs to the complex I 23 kDa subunit family. As to quaternary structure, NDH-1 is composed of 15 different subunits. Subunits NuoA, H, J, K, L, M, N constitute the membrane sector of the complex. Requires [4Fe-4S] cluster as cofactor.

The protein resides in the cell membrane. The enzyme catalyses a quinone + NADH + 5 H(+)(in) = a quinol + NAD(+) + 4 H(+)(out). Functionally, NDH-1 shuttles electrons from NADH, via FMN and iron-sulfur (Fe-S) centers, to quinones in the respiratory chain. The immediate electron acceptor for the enzyme in this species is believed to be ubiquinone. Couples the redox reaction to proton translocation (for every two electrons transferred, four hydrogen ions are translocated across the cytoplasmic membrane), and thus conserves the redox energy in a proton gradient. This is NADH-quinone oxidoreductase subunit I from Deinococcus radiodurans (strain ATCC 13939 / DSM 20539 / JCM 16871 / CCUG 27074 / LMG 4051 / NBRC 15346 / NCIMB 9279 / VKM B-1422 / R1).